Reading from the N-terminus, the 755-residue chain is Biodegradative arginine decarboxylase (755 aa).

Lys386 is modified (N6-(pyridoxal phosphate)lysine).

This sequence belongs to the Orn/Lys/Arg decarboxylase class-I family. Homodecamer. The basic unit is a homodimer, organized into a ring of giving a pentamer of five homodimers. Pyridoxal 5'-phosphate serves as cofactor.

The protein resides in the cytoplasm. The catalysed reaction is L-arginine + H(+) = agmatine + CO2. With respect to regulation, homodimers are probably inactive, their assembly into a homodecamer at low pH requires neutralization of negatively charged residues. This uses cytoplasmic protons, contributing pH regulation and stabilizes the homodecamer. Functionally, component of the acid-resistance (AR) system allowing enteric pathogens to survive the acidic environment in the stomach. ADC can be found in two forms: biodegradative (this enzyme) and biosynthetic (speA). The biodegradative form plays a role in regulating pH by consuming proteins. Converts arginine imported by AdiC to agmatine which is then exported by AdiC. The protein is Biodegradative arginine decarboxylase (adiA) of Escherichia coli (strain K12).